A 414-amino-acid polypeptide reads, in one-letter code: 3-phosphoshikimate 1-carboxyvinyltransferase (414 aa).

The 3-phosphoshikimate site is built by Lys20, Ser21, and Arg25. Lys20 is a binding site for phosphoenolpyruvate. Residue Arg113 coordinates phosphoenolpyruvate. Residues Ser154, Ser155, Gln156, Ser181, Asp296, and Lys323 each coordinate 3-phosphoshikimate. Residue Gln156 coordinates phosphoenolpyruvate. The active-site Proton acceptor is the Asp296. Positions 327, 371, and 395 each coordinate phosphoenolpyruvate.

This sequence belongs to the EPSP synthase family. As to quaternary structure, monomer.

The protein resides in the cytoplasm. It catalyses the reaction 3-phosphoshikimate + phosphoenolpyruvate = 5-O-(1-carboxyvinyl)-3-phosphoshikimate + phosphate. The protein operates within metabolic intermediate biosynthesis; chorismate biosynthesis. Its function is as follows. Catalyzes the transfer of the enolpyruvyl moiety of phosphoenolpyruvate (PEP) to the 5-hydroxyl of shikimate-3-phosphate (S3P) to produce enolpyruvyl shikimate-3-phosphate and inorganic phosphate. This Saccharolobus solfataricus (strain ATCC 35092 / DSM 1617 / JCM 11322 / P2) (Sulfolobus solfataricus) protein is 3-phosphoshikimate 1-carboxyvinyltransferase.